The primary structure comprises 304 residues: Tyrosine recombinase XerC (304 aa).

The region spanning 6 to 92 (NKLYLQAQAY…VLRQWFAYLV (87 aa)) is the Core-binding (CB) domain. A Tyr recombinase domain is found at 113-292 (HLPKNIDAER…DFQHLAKIYD (180 aa)). Catalysis depends on residues Arg152, Lys176, His244, Arg247, and His270. The O-(3'-phospho-DNA)-tyrosine intermediate role is filled by Tyr279.

The protein belongs to the 'phage' integrase family. XerC subfamily. Forms a cyclic heterotetrameric complex composed of two molecules of XerC and two molecules of XerD.

It localises to the cytoplasm. In terms of biological role, site-specific tyrosine recombinase, which acts by catalyzing the cutting and rejoining of the recombining DNA molecules. The XerC-XerD complex is essential to convert dimers of the bacterial chromosome into monomers to permit their segregation at cell division. It also contributes to the segregational stability of plasmids. The sequence is that of Tyrosine recombinase XerC from Haemophilus ducreyi (strain 35000HP / ATCC 700724).